The chain runs to 150 residues: Avidin-related protein 6 (150 aa).

An N-terminal signal peptide occupies residues 1–24 (MVHATSPLLLLLLLSLALVAPGLS). In terms of domain architecture, Avidin-like spans 26-147 (RKCSLTGEWD…GYNNFTRQRT (122 aa)). Cys-28 and Cys-105 are disulfide-bonded. Positions 36 and 40 each coordinate biotin. N-linked (GlcNAc...) asparagine glycosylation is present at Asn-54. Biotin-binding residues include Tyr-57, Thr-59, and Asp-63. Residue Asn-93 is glycosylated (N-linked (GlcNAc...) asparagine). 3 residues coordinate biotin: Ser-95, Ser-99, and Asn-140. The N-linked (GlcNAc...) asparagine glycan is linked to Asn-141.

This sequence belongs to the avidin/streptavidin family. In terms of assembly, homotetramer. Post-translationally, glycosylated.

It is found in the secreted. Its function is as follows. Forms a strong non-covalent specific complex with biotin. This Gallus gallus (Chicken) protein is Avidin-related protein 6 (AVR6).